Reading from the N-terminus, the 86-residue chain is Large ribosomal subunit protein bL31B (86 aa).

The protein belongs to the bacterial ribosomal protein bL31 family. Type B subfamily. In terms of assembly, part of the 50S ribosomal subunit.

The chain is Large ribosomal subunit protein bL31B from Chloroherpeton thalassium (strain ATCC 35110 / GB-78).